The following is a 589-amino-acid chain: Serine/threonine-protein phosphatase 2A 65 kDa regulatory subunit A alpha isoform (589 aa).

Position 2 is an N-acetylalanine (Ala2). 15 HEAT repeats span residues Asp8–Arg46, Thr47–Glu84, Tyr85–Asp123, Leu124–Ala161, Val162–Asn200, Val201–Asp239, Leu240–Ile278, Thr279–Val321, Ile322–Asn360, Thr361–Gln399, Leu400–Phe438, Phe439–Trp477, Ala478–Ile516, Thr517–Thr555, and Leu556–Ala589. The tract at residues Asp8 to Gln399 is PP2A subunit B binding. The segment at Thr47–Val321 is polyoma small and medium T antigens Binding. Residues Tyr85–Asp239 are SV40 small T antigen binding. Lys280 is modified (N6-acetyllysine). The tract at residues Leu400–Ala589 is PP2A subunit C binding.

The protein belongs to the phosphatase 2A regulatory subunit A family. As to quaternary structure, PP2A consists of a common heterodimeric core enzyme, composed of PPP2CA a 36 kDa catalytic subunit (subunit C) and PPP2R1A a 65 kDa constant regulatory subunit (PR65 or subunit A), that associates with a variety of regulatory subunits. Proteins that associate with the core dimer include three families of regulatory subunits B (the R2/B/PR55/B55, R3/B''/PR72/PR130/PR59 and R5/B'/B56 families), the 48 kDa variable regulatory subunit, viral proteins, and cell signaling molecules. Found in a complex with at least ARL2, PPP2CB, PPP2R1A, PPP2R2A, PPP2R5E and TBCD. Interacts with the PP2A C catalytic subunit PPP2CA. Interacts with the PP2A B subunit PPP2R2A. Interacts with the PP2A B subunit PPP2R5D. Interacts with FOXO1; the interaction dephosphorylates FOXO1 on AKT-mediated phosphorylation sites. Interacts with IPO9. Interacts with TP53 and SGO1. Interacts with PLA2G16; this interaction might decrease PP2A activity. Interacts with CTTNBP2NL. Interacts with GNA12; the interaction promotes protein phosphatase 2A activation causing dephosphorylation of MAPT. Interacts with CIP2A; this interaction stabilizes CIP2A. Interacts with PABIR1/FAM122A. Interacts with ADCY8; antagonizes interaction between ADCY8 and calmodulin. Interacts with CRTC3 (when phosphorylated at 'Ser-391'). Interacts with SPRY2. Part of the core of STRIPAK complexes composed of PP2A catalytic and scaffolding subunits, the striatins (PP2A regulatory subunits), the striatin-associated proteins MOB4, STRIP1 and STRIP2, PDCD10 and members of the STE20 kinases, such as STK24 and STK26. Component of the Integrator-PP2A (INTAC) complex, composed of the Integrator core complex and protein phosphatase 2A subunits PPP2CA and PPP2R1A. In terms of assembly, (Microbial infection) Interacts with JC virus small t antigen; this interaction inhibits PPP2R1A activity.

Its subcellular location is the cytoplasm. The protein resides in the nucleus. It is found in the chromosome. The protein localises to the centromere. It localises to the lateral cell membrane. Its subcellular location is the cell projection. The protein resides in the dendrite. Functionally, the PR65 subunit of protein phosphatase 2A serves as a scaffolding molecule to coordinate the assembly of the catalytic subunit and a variable regulatory B subunit. Upon interaction with GNA12 promotes dephosphorylation of microtubule associated protein TAU/MAPT. Required for proper chromosome segregation and for centromeric localization of SGO1 in mitosis. Together with RACK1 adapter, mediates dephosphorylation of AKT1 at 'Ser-473', preventing AKT1 activation and AKT-mTOR signaling pathway. Dephosphorylation of AKT1 is essential for regulatory T-cells (Treg) homeostasis and stability. Part of the striatin-interacting phosphatase and kinase (STRIPAK) complexes. STRIPAK complexes have critical roles in protein (de)phosphorylation and are regulators of multiple signaling pathways including Hippo, MAPK, nuclear receptor and cytoskeleton remodeling. Different types of STRIPAK complexes are involved in a variety of biological processes such as cell growth, differentiation, apoptosis, metabolism and immune regulation. Key mediator of a quality checkpoint during transcription elongation as part of the Integrator-PP2A (INTAC) complex. The INTAC complex drives premature transcription termination of transcripts that are unfavorably configured for transcriptional elongation: within the INTAC complex, acts as a scaffolding subunit for PPP2CA, which catalyzes dephosphorylation of the C-terminal domain (CTD) of Pol II subunit POLR2A/RPB1 and SUPT5H/SPT5, thereby preventing transcriptional elongation. Regulates the recruitment of the SKA complex to kinetochores. The chain is Serine/threonine-protein phosphatase 2A 65 kDa regulatory subunit A alpha isoform from Homo sapiens (Human).